Consider the following 160-residue polypeptide: Cyclic pyranopterin monophosphate synthase (160 aa).

Substrate contacts are provided by residues 75 to 77 (LCH) and 113 to 114 (ME). Residue Asp-128 is part of the active site.

It belongs to the MoaC family. As to quaternary structure, homohexamer; trimer of dimers.

The catalysed reaction is (8S)-3',8-cyclo-7,8-dihydroguanosine 5'-triphosphate = cyclic pyranopterin phosphate + diphosphate. It functions in the pathway cofactor biosynthesis; molybdopterin biosynthesis. In terms of biological role, catalyzes the conversion of (8S)-3',8-cyclo-7,8-dihydroguanosine 5'-triphosphate to cyclic pyranopterin monophosphate (cPMP). This is Cyclic pyranopterin monophosphate synthase from Beijerinckia indica subsp. indica (strain ATCC 9039 / DSM 1715 / NCIMB 8712).